Here is a 207-residue protein sequence, read N- to C-terminus: Ras-related protein Rab-7a (207 aa).

Residue threonine 2 is modified to N-acetylthreonine. The GTP site is built by serine 17, glycine 18, valine 19, glycine 20, lysine 21, threonine 22, serine 23, serine 34, asparagine 35, tyrosine 37, and threonine 40. Position 22 (threonine 22) interacts with Mg(2+). Positions 28–41 (YVNKKFSNQYKATI) match the Switch 1 motif. The Mg(2+) site is built by threonine 40 and aspartate 63. Glycine 66 provides a ligand contact to GTP. Positions 67–82 (QERFQSLSVAFYRGAD) match the Switch 2 motif. Position 72 is a phosphoserine (serine 72). Positions 125, 126, 128, 156, and 157 each coordinate GTP. Glycyl lysine isopeptide (Lys-Gly) (interchain with G-Cter in ubiquitin) cross-links involve residues lysine 191 and lysine 194. S-geranylgeranyl cysteine attachment occurs at residues cysteine 205 and cysteine 207. The residue at position 207 (cysteine 207) is a Cysteine methyl ester.

Belongs to the small GTPase superfamily. Rab family. As to quaternary structure, interacts with NTRK1/TRKA. Interacts with RILP. Interacts with PSMA7. Interacts with RNF115. Interacts with FYCO1. Interacts with the PIK3C3/VPS34-PIK3R4 complex. The GTP-bound form interacts with OSBPL1A. The GTP-bound form interacts with RAC1. Interacts with CLN3. Interacts with CHM, the substrate-binding subunit of the Rab geranylgeranyltransferase complex. Interacts with C9orf72. Does not interact with HPS4 and the BLOC-3 complex (heterodimer of HPS1 and HPS4). Interacts with CLN5. Interacts with PLEKHM1 (via N- and C-terminus). Interacts with PRPH; the interaction is direct. Interacts with VPS13A. The GDP-bound form interacts with RIMOC1. Interacts with the MON1A-CCZ1B complex and this interaction is enhanced in the presence of RIMOC1. Interacts with VPS39 and VPS41. Forms a ternary complex with LAMP2 and RUFY4; the interaction with LAMP2 is mediated by RUFY4 (via RUN and coiled coil domains). Mg(2+) serves as cofactor. In terms of processing, deubiquitination at Lys-191 and Lys-194 by USP32. Post-translationally, phosphorylated at Ser-72 by LRRK1; phosphorylation is dependent on protein kinase C (PKC) activation of LRRK1. Prenylated. Prenylation is required for association with cellular membranes.

Its subcellular location is the cytoplasmic vesicle. It is found in the phagosome membrane. The protein localises to the late endosome membrane. It localises to the lysosome membrane. The protein resides in the melanosome membrane. Its subcellular location is the autophagosome membrane. It is found in the lipid droplet. The protein localises to the endosome membrane. It localises to the mitochondrion membrane. The enzyme catalyses GTP + H2O = GDP + phosphate + H(+). Its activity is regulated as follows. Regulated by guanine nucleotide exchange factors (GEFs) which promote the exchange of bound GDP for free GTP. Regulated by GTPase activating proteins (GAPs) which increase the GTP hydrolysis activity. Inhibited by GDP dissociation inhibitors (GDIs). In terms of biological role, the small GTPases Rab are key regulators of intracellular membrane trafficking, from the formation of transport vesicles to their fusion with membranes. Rabs cycle between an inactive GDP-bound form and an active GTP-bound form that is able to recruit to membranes different sets of downstream effectors directly responsible for vesicle formation, movement, tethering and fusion. In its active state, RAB7A binds to a variety of effector proteins playing a key role in the regulation of endo-lysosomal trafficking. Governs early-to-late endosomal maturation, microtubule minus-end as well as plus-end directed endosomal migration and positioning, and endosome-lysosome transport through different protein-protein interaction cascades. Also plays a central role in growth-factor-mediated cell signaling, nutrient-transporter-mediated nutrient uptake, neurotrophin transport in the axons of neurons and lipid metabolism. Also involved in regulation of some specialized endosomal membrane trafficking, such as maturation of melanosomes, pathogen-induced phagosomes (or vacuoles) and autophagosomes. Plays a role in the maturation and acidification of phagosomes that engulf pathogens, such as S.aureus and Mycobacteria. Plays a role in the fusion of phagosomes with lysosomes. In concert with RAC1, plays a role in regulating the formation of RBs (ruffled borders) in osteoclasts. Controls the endosomal trafficking and neurite outgrowth signaling of NTRK1/TRKA. Regulates the endocytic trafficking of the EGF-EGFR complex by regulating its lysosomal degradation. Involved in the ADRB2-stimulated lipolysis through lipophagy, a cytosolic lipase-independent autophagic pathway. Required for the exosomal release of SDCBP, CD63 and syndecan. Required for vesicular trafficking and cell surface expression of ACE2. May play a role in PRPH neuronal intermediate filament assembly. In Oryctolagus cuniculus (Rabbit), this protein is Ras-related protein Rab-7a (RAB7A).